We begin with the raw amino-acid sequence, 104 residues long: MEDTSRCIDDVLKIGQQEKEIRQAEFSDAQGEREEVKCIDYTVDLEAGLPRHESSGKSNTLKQCYNAVLGFLEELIIVIIIVLLLYSLTMVGLFYVMTMTKFLF.

Residues 76–96 traverse the membrane as a helical segment; that stretch reads IIVIIIVLLLYSLTMVGLFYV.

It is found in the vacuole membrane. The chain is Phosphate metabolism protein 6 (PHM6) from Saccharomyces cerevisiae (strain ATCC 204508 / S288c) (Baker's yeast).